A 320-amino-acid polypeptide reads, in one-letter code: Taste receptor type 2 member 129 (320 aa).

Topologically, residues 1–8 are extracellular; that stretch reads MDGIVQNM. A helical membrane pass occupies residues 9-29; the sequence is FTFIVIVEIIIGWIGNGFIAL. At 30-55 the chain is on the cytoplasmic side; sequence VNCIHWYKRRKISALNQILTALAFSR. A helical membrane pass occupies residues 56-76; that stretch reads IYLLLTVFTVIAVSTLYTHVL. Residues 77–88 are Extracellular-facing; that stretch reads VTRRVVKLINFH. Residues 89-109 form a helical membrane-spanning segment; sequence LLFSNHFSMWLAACLGLYYFL. At 110–128 the chain is on the cytoplasmic side; the sequence is KIAHFPNSIFVYLKMRINQ. The helical transmembrane segment at 129–149 threads the bilayer; sequence VVSGTLLMSLGLLFLNTLLIN. Residues 150–185 lie on the Extracellular side of the membrane; sequence SYIDTKIDDYREHLLYDFTSNNTASFYRVILVINNC. The N-linked (GlcNAc...) asparagine glycan is linked to Asn-170. Residues 186-206 traverse the membrane as a helical segment; that stretch reads IFTSIPFTLSQSTFLLLIFSL. Residues 207–233 are Cytoplasmic-facing; sequence WRHYKKMQQHAQRCRDVLADAHIRVLQ. Residues 234–254 form a helical membrane-spanning segment; it reads TMVTYVLLCAIFFLSLSMQIL. Over 255–264 the chain is Extracellular; sequence RSELLKNILY. The chain crosses the membrane as a helical span at residues 265–285; sequence VRFCEIVAAVFPSGHSCVLIC. The Cytoplasmic segment spans residues 286-320; the sequence is RDTNLRGTFLSVLSWLKQRFTSWIPNINCRSSCIF.

The protein belongs to the G-protein coupled receptor T2R family.

The protein resides in the membrane. Its function is as follows. Putative taste receptor which may play a role in the perception of bitterness. The polypeptide is Taste receptor type 2 member 129 (Mus musculus (Mouse)).